Reading from the N-terminus, the 257-residue chain is Glutamate racemase (257 aa).

Substrate contacts are provided by residues 12–13 (DS) and 44–45 (YG). Catalysis depends on Cys-75, which acts as the Proton donor/acceptor. 76–77 (NT) serves as a coordination point for substrate. The active-site Proton donor/acceptor is the Cys-186. 187 to 188 (TH) serves as a coordination point for substrate.

It belongs to the aspartate/glutamate racemases family.

It catalyses the reaction L-glutamate = D-glutamate. It functions in the pathway cell wall biogenesis; peptidoglycan biosynthesis. Provides the (R)-glutamate required for cell wall biosynthesis. The sequence is that of Glutamate racemase from Clostridium kluyveri (strain NBRC 12016).